The following is a 931-amino-acid chain: Netrin receptor UNC5C (931 aa).

Positions 1 to 40 are cleaved as a signal peptide; sequence MRKGLRATAARCGLGLGYLLQMLVLPALALLSASGTGSAA. Residues 41 to 380 lie on the Extracellular side of the membrane; it reads QDDDFFHELP…APDSDDVALY (340 aa). Residues 62–159 form the Ig-like domain; the sequence is PHFLIEPEEA…AGTTKSRKAY (98 aa). 9 cysteine pairs are disulfide-bonded: cysteine 83–cysteine 144, cysteine 95–cysteine 142, cysteine 188–cysteine 239, cysteine 272–cysteine 309, cysteine 276–cysteine 313, cysteine 287–cysteine 299, cysteine 328–cysteine 362, cysteine 332–cysteine 367, and cysteine 340–cysteine 352. An Ig-like C2-type domain is found at 161–256; it reads RIAYLRKTFE…KRKSTTATVI (96 aa). The N-linked (GlcNAc...) asparagine glycan is linked to asparagine 236. TSP type-1 domains follow at residues 260-314 and 316-368; these read NGGW…TLCP and DGRW…GLCM. An N-linked (GlcNAc...) asparagine glycan is attached at asparagine 361. The chain crosses the membrane as a helical span at residues 381–401; it reads VGIVIAVIVCLAISVVVALFV. The Cytoplasmic segment spans residues 402-931; it reads YRKNHRDFES…VVSLAAEGQY (530 aa). Residues 402–931 form a required for netrin-mediated axon repulsion of neuronal growth cones region; that stretch reads YRKNHRDFES…VVSLAAEGQY (530 aa). Residue serine 502 is modified to Phosphoserine. Residues 530–673 form the ZU5 domain; the sequence is CTAFGSFNSL…LSTYALVGHS (144 aa). Tyrosine 568 carries the phosphotyrosine modification. Residues 694–712 form an interaction with DCC region; the sequence is SLEYSIRVYCLDDTQDALK. Residues 850–929 form the Death domain; the sequence is QKLCSSLDAP…ETVVSLAAEG (80 aa).

It belongs to the unc-5 family. As to quaternary structure, interacts with DCC (via cytoplasmic domain). Interacts (tyrosine phosphorylated form) with PTPN11. Interacts (via extracellular domain) with FLRT3 (via extracellular domain). Interacts (via Ig-like C2-type domain) with DSCAM (via extracellular domain). Interacts (via death domain) with DAPK1. Interacts (via cytoplasmic domain) with TUBB3; this interaction is decreased by NTN1/Netrin-1. In terms of processing, proteolytically cleaved by caspases during apoptosis. The cleavage does not take place when the receptor is associated with netrin ligand. Its cleavage by caspases is required to induce apoptosis. Post-translationally, phosphorylated on different cytoplasmic tyrosine residues. Phosphorylation of Tyr-568 leads to an interaction with PTPN11 phosphatase, suggesting that its activity is regulated by phosphorylation/dephosphorylation. Tyrosine phosphorylation is netrin-dependent. In terms of tissue distribution, mainly expressed in brain. Expressed in temporal lobe cortical neurons and in neurons of the hippocampal pyramidal layer. Also expressed in kidney. Not expressed in developing or adult lung.

The protein localises to the cell membrane. Its subcellular location is the cell surface. The protein resides in the synapse. It localises to the synaptosome. It is found in the cell projection. The protein localises to the axon. Its subcellular location is the dendrite. The protein resides in the growth cone. It localises to the lamellipodium. It is found in the filopodium. Its function is as follows. Receptor for netrin required for axon guidance. Mediates axon repulsion of neuronal growth cones in the developing nervous system upon ligand binding. NTN1/Netrin-1 binding might cause dissociation of UNC5C from polymerized TUBB3 in microtubules and thereby lead to increased microtubule dynamics and axon repulsion. Axon repulsion in growth cones may also be caused by its association with DCC that may trigger signaling for repulsion. Might also collaborate with DSCAM in NTN1-mediated axon repulsion independently of DCC. Also involved in corticospinal tract axon guidance independently of DCC. Involved in dorsal root ganglion axon projection towards the spinal cord. It also acts as a dependence receptor required for apoptosis induction when not associated with netrin ligand. The sequence is that of Netrin receptor UNC5C (UNC5C) from Homo sapiens (Human).